The sequence spans 712 residues: MFPHEEKLIRERLGREPNELEWAMLEVMWSEHASYKSSRPWLKLLPTENEHVILGPGEDAGIVKFDDETWVVVGIESHNHPSAVEPYGGAATGVGGIVRDILCMGARPIALLDPIRFGPLEKERNRYLFEYVVKGIADYGNRIGVPTVGGETEFDESLDSYTLVNVACVGIMRPEHLVHSYVTEAGLKLILVGNRTGRDGVHGVTFASEELSENTEEDRSAVQIPDPFTEKLLIEATLEAVYTGRVKALKDLGGGGLTCAASEMAGKKGFGAVIYADRVPLREPGMTPTEVMISESQERMLFAVKPEDVEEIGRIFEEYELEWTVVGETIEEPRFVVYWKGEKVADLPIELLTEVPTIEWELKPYSAEGPVETPDVPFERAFDLVWGSPNILSKRWVWEQYDHEVQGRTVLKPGRDAAVLKINDEYGLAFVADGNPNHSYLNPYQGAMGAVAEVVRNLVSVGAEPLALVDNLNFASPERPEVYWSFAETVRGLADAARAFGLAYVSGNVSFYNEVVDRPIKPTPVVAGLGKVKLEAIPNGGFEEGLLIGVVGLTKPELGGSELFARLGVEGGLAPRVNLEEEKANANGVLEAIRRGLVRAVHDVSRGGLAVALAKMAVAGNTGFTADLSKVPSETTNPIEVAFSESHGRYIVAFPEENLEELKGLFKHFVIIGRTGGSDAVFLWNGWELLRKPVSELKAVHESLPMLLGEEE.

His-32 is an active-site residue. ATP is bound at residue Tyr-35. Residue Glu-76 participates in Mg(2+) binding. Substrate contacts are provided by residues 77–80 (SHNH) and Arg-99. His-78 (proton acceptor) is an active-site residue. Mg(2+) is bound at residue Asp-100. Residue Gln-223 participates in substrate binding. Asp-251 provides a ligand contact to Mg(2+). A substrate-binding site is contributed by 295 to 297 (ESQ). Residues Asp-470 and Gly-507 each coordinate ATP. Residue Asn-508 participates in Mg(2+) binding. Ser-510 lines the substrate pocket.

It belongs to the FGAMS family. As to quaternary structure, monomer. Part of the FGAM synthase complex composed of 1 PurL, 1 PurQ and 2 PurS subunits.

Its subcellular location is the cytoplasm. It carries out the reaction N(2)-formyl-N(1)-(5-phospho-beta-D-ribosyl)glycinamide + L-glutamine + ATP + H2O = 2-formamido-N(1)-(5-O-phospho-beta-D-ribosyl)acetamidine + L-glutamate + ADP + phosphate + H(+). It functions in the pathway purine metabolism; IMP biosynthesis via de novo pathway; 5-amino-1-(5-phospho-D-ribosyl)imidazole from N(2)-formyl-N(1)-(5-phospho-D-ribosyl)glycinamide: step 1/2. Its function is as follows. Part of the phosphoribosylformylglycinamidine synthase complex involved in the purines biosynthetic pathway. Catalyzes the ATP-dependent conversion of formylglycinamide ribonucleotide (FGAR) and glutamine to yield formylglycinamidine ribonucleotide (FGAM) and glutamate. The FGAM synthase complex is composed of three subunits. PurQ produces an ammonia molecule by converting glutamine to glutamate. PurL transfers the ammonia molecule to FGAR to form FGAM in an ATP-dependent manner. PurS interacts with PurQ and PurL and is thought to assist in the transfer of the ammonia molecule from PurQ to PurL. The chain is Phosphoribosylformylglycinamidine synthase subunit PurL from Thermococcus gammatolerans (strain DSM 15229 / JCM 11827 / EJ3).